Consider the following 344-residue polypeptide: Phosphoribosylformylglycinamidine cyclo-ligase (344 aa).

It belongs to the AIR synthase family.

The protein localises to the cytoplasm. The catalysed reaction is 2-formamido-N(1)-(5-O-phospho-beta-D-ribosyl)acetamidine + ATP = 5-amino-1-(5-phospho-beta-D-ribosyl)imidazole + ADP + phosphate + H(+). It participates in purine metabolism; IMP biosynthesis via de novo pathway; 5-amino-1-(5-phospho-D-ribosyl)imidazole from N(2)-formyl-N(1)-(5-phospho-D-ribosyl)glycinamide: step 2/2. The polypeptide is Phosphoribosylformylglycinamidine cyclo-ligase (Neisseria gonorrhoeae (strain ATCC 700825 / FA 1090)).